The chain runs to 350 residues: 4-hydroxy-3-methylbut-2-enyl diphosphate reductase (350 aa).

Cys19 is a [4Fe-4S] cluster binding site. (2E)-4-hydroxy-3-methylbut-2-enyl diphosphate-binding residues include His48 and His84. Residues His48 and His84 each coordinate dimethylallyl diphosphate. Isopentenyl diphosphate-binding residues include His48 and His84. Cys106 is a binding site for [4Fe-4S] cluster. His134 serves as a coordination point for (2E)-4-hydroxy-3-methylbut-2-enyl diphosphate. Position 134 (His134) interacts with dimethylallyl diphosphate. His134 is a binding site for isopentenyl diphosphate. Glu136 acts as the Proton donor in catalysis. Thr175 provides a ligand contact to (2E)-4-hydroxy-3-methylbut-2-enyl diphosphate. Residue Cys205 participates in [4Fe-4S] cluster binding. Residues Ser233, Ser234, Asn235, and Ser278 each coordinate (2E)-4-hydroxy-3-methylbut-2-enyl diphosphate. Residues Ser233, Ser234, Asn235, and Ser278 each contribute to the dimethylallyl diphosphate site. Ser233, Ser234, Asn235, and Ser278 together coordinate isopentenyl diphosphate.

The protein belongs to the IspH family. It depends on [4Fe-4S] cluster as a cofactor.

The catalysed reaction is isopentenyl diphosphate + 2 oxidized [2Fe-2S]-[ferredoxin] + H2O = (2E)-4-hydroxy-3-methylbut-2-enyl diphosphate + 2 reduced [2Fe-2S]-[ferredoxin] + 2 H(+). It carries out the reaction dimethylallyl diphosphate + 2 oxidized [2Fe-2S]-[ferredoxin] + H2O = (2E)-4-hydroxy-3-methylbut-2-enyl diphosphate + 2 reduced [2Fe-2S]-[ferredoxin] + 2 H(+). It participates in isoprenoid biosynthesis; dimethylallyl diphosphate biosynthesis; dimethylallyl diphosphate from (2E)-4-hydroxy-3-methylbutenyl diphosphate: step 1/1. It functions in the pathway isoprenoid biosynthesis; isopentenyl diphosphate biosynthesis via DXP pathway; isopentenyl diphosphate from 1-deoxy-D-xylulose 5-phosphate: step 6/6. Catalyzes the conversion of 1-hydroxy-2-methyl-2-(E)-butenyl 4-diphosphate (HMBPP) into a mixture of isopentenyl diphosphate (IPP) and dimethylallyl diphosphate (DMAPP). Acts in the terminal step of the DOXP/MEP pathway for isoprenoid precursor biosynthesis. The protein is 4-hydroxy-3-methylbut-2-enyl diphosphate reductase of Brucella anthropi (strain ATCC 49188 / DSM 6882 / CCUG 24695 / JCM 21032 / LMG 3331 / NBRC 15819 / NCTC 12168 / Alc 37) (Ochrobactrum anthropi).